Consider the following 169-residue polypeptide: MSTPQDLIDASIPFLNELKNRTAGEDLEKWLNDAYGPGSEFYERVAGLVKDGVRDGWAANIEVDGPRYRRSRLAEPCEELNYFSITAVYMDSVEPYRGQYHQHPYGELNMVVPLNEGAELAGPRGWCGGGWTAPDPASHHYPEVRGGAIIALFYLPAGRISYDITPPAE.

Belongs to the PnbB family.

The enzyme catalyses 4-hydroxylaminobenzoate + H2O + H(+) = 3,4-dihydroxybenzoate + NH4(+). In terms of biological role, lyase involved in the degradation of nitroaromatic compounds. Catalyzes the conversion of 4-hydroxylaminobenzoate to 3,4-dihydroxybenzoate (protocatechuate). The protein is 4-hydroxylaminobenzoate lyase of Nocardioides sp. (strain LMS-CY).